A 207-amino-acid polypeptide reads, in one-letter code: Suppressor of IKBKE 1 (207 aa).

Coiled coils occupy residues 70-102 (HILL…DALE) and 164-192 (CKVQ…ESLQ).

It belongs to the SIKE family. In terms of assembly, interacts with IKBKE and TBK1 via its coiled coil region. Interaction with TBK1 is disrupted upon viral infection or TLR3 stimulation. Interacts with CDC42BPB. Interacts with SIKE1 which mediates association with the STRIPAK core complex composed of PP2A catalytic and scaffolding subunits, the striatins (PP2A regulatory subunits), the striatin-associated proteins MOB4, STRIP1 and STRIP2, PDCD10 and members of the STE20 kinases, such as STK24 and STK26.

The protein localises to the cytoplasm. Functionally, physiological suppressor of IKK-epsilon and TBK1 that plays an inhibitory role in virus- and TLR3-triggered IRF3. Inhibits TLR3-mediated activation of interferon-stimulated response elements (ISRE) and the IFN-beta promoter. May act by disrupting the interactions of IKBKE or TBK1 with TICAM1/TRIF, IRF3 and RIGI. Does not inhibit NF-kappa-B activation pathways. Associates with the striatin-interacting phosphatase and kinase (STRIPAK) core complex, forming the extended (SIKE1:SLMAP)STRIPAK complex. The (SIKE1:SLMAP)STRIPAK complex dephosphorylates STK3 leading to the inhibition of Hippo signaling and the control of cell growth. The sequence is that of Suppressor of IKBKE 1 (Sike1) from Mus musculus (Mouse).